The following is a 291-amino-acid chain: Small ribosomal subunit protein uS2 (291 aa).

The segment at 256 to 291 (LRGEGTAPAASEEQPAEEPAPAAAEAQTDAAVGTAV) is disordered. The span at 261-291 (TAPAASEEQPAEEPAPAAAEAQTDAAVGTAV) shows a compositional bias: low complexity.

This sequence belongs to the universal ribosomal protein uS2 family.

This Frankia alni (strain DSM 45986 / CECT 9034 / ACN14a) protein is Small ribosomal subunit protein uS2.